Consider the following 618-residue polypeptide: Crinkler effector protein 16 (618 aa).

A signal peptide spans 1–19 (MVVVSLQCAIVGQAGSSFD). Residues 18 to 57 (FDVEIDDGAKVSKLKDAIKAKKPNDFKVVDADKLHLFLAK) are LQLFLAK domain. The segment at 58–139 (QPVEDESGKE…NMELPSSEQI (82 aa)) is DWL domain. Positions 140–146 (HVLVVVP) match the HVLVXXP motif motif. Asparagine 534 carries N-linked (GlcNAc...) asparagine glycosylation.

The protein belongs to the Crinkler effector family.

It localises to the secreted. Its subcellular location is the host nucleus. Its function is as follows. Secreted effector that elicits necrosis in host plants, a characteristic of plant innate immunity. The chain is Crinkler effector protein 16 from Phytophthora infestans (Potato late blight agent).